The sequence spans 273 residues: Peptidyl-prolyl cis-trans isomerase E (273 aa).

An RRM domain is found at 1–48 (MPMDYQTEKHRGFAFVEFEEVEDAMSAIDNMNESEIFGRTIRVNVARP). The segment at 77–103 (RKLDEPDIVNPSDTSENVEDLSDEEMR) is disordered. The region spanning 115–271 (FFDIRIGNGD…EPVIISRCGE (157 aa)) is the PPIase cyclophilin-type domain.

It belongs to the cyclophilin-type PPIase family. PPIase E subfamily.

It is found in the cytoplasm. The enzyme catalyses [protein]-peptidylproline (omega=180) = [protein]-peptidylproline (omega=0). Binds cyclosporin A (CsA). CsA mediates some of its effects via an inhibitory action on PPIase. Functionally, PPIases accelerate the folding of proteins. It catalyzes the cis-trans isomerization of proline imidic peptide bonds in oligopeptides. This chain is Peptidyl-prolyl cis-trans isomerase E, found in Schistosoma mansoni (Blood fluke).